The sequence spans 255 residues: Triosephosphate isomerase (255 aa).

10 to 12 serves as a coordination point for substrate; the sequence is NWK. The active-site Electrophile is the His96. Glu169 functions as the Proton acceptor in the catalytic mechanism. Residues Gly175, Ser214, and 235 to 236 contribute to the substrate site; that span reads GG.

Belongs to the triosephosphate isomerase family. Homodimer.

It localises to the cytoplasm. It carries out the reaction D-glyceraldehyde 3-phosphate = dihydroxyacetone phosphate. It functions in the pathway carbohydrate biosynthesis; gluconeogenesis. The protein operates within carbohydrate degradation; glycolysis; D-glyceraldehyde 3-phosphate from glycerone phosphate: step 1/1. In terms of biological role, involved in the gluconeogenesis. Catalyzes stereospecifically the conversion of dihydroxyacetone phosphate (DHAP) to D-glyceraldehyde-3-phosphate (G3P). In Coxiella burnetii (strain Dugway 5J108-111), this protein is Triosephosphate isomerase.